The sequence spans 63 residues: Protein CYSTEINE-RICH TRANSMEMBRANE MODULE 12 (63 aa).

A disordered region spans residues 1–34 (MQDMRDQNPPQGYPAAEQVSEQPGQDKKKKKPRF). A helical transmembrane segment spans residues 40-56 (KGDRGFIEGCLFALCCC).

The protein belongs to the CYSTM1 family. In terms of assembly, homodimer and heterodimers. Binds weakly to CYSTM4, CYSTM6 and CYSTM7. Mostly expressed in roots, flowers and siliques and, to a lower extent, in stems and leaves.

It localises to the cell membrane. Its subcellular location is the cytoplasm. Functionally, involved in resistance to abiotic stress. This chain is Protein CYSTEINE-RICH TRANSMEMBRANE MODULE 12, found in Arabidopsis thaliana (Mouse-ear cress).